The following is a 451-amino-acid chain: Uronate isomerase (451 aa).

Belongs to the metallo-dependent hydrolases superfamily. Uronate isomerase family.

The catalysed reaction is D-glucuronate = D-fructuronate. It carries out the reaction aldehydo-D-galacturonate = keto-D-tagaturonate. It functions in the pathway carbohydrate metabolism; pentose and glucuronate interconversion. The chain is Uronate isomerase from Thermotoga sp. (strain RQ2).